A 198-amino-acid polypeptide reads, in one-letter code: Dual specificity protein phosphatase 13B (198 aa).

One can recognise a Tyrosine-protein phosphatase domain in the interval 45-193; it reads HINEVWPNLF…LQVLDNRLRR (149 aa). Cys-138 acts as the Phosphocysteine intermediate in catalysis.

It belongs to the protein-tyrosine phosphatase family. Non-receptor class dual specificity subfamily. Most abundantly expressed in the testis.

It carries out the reaction O-phospho-L-tyrosyl-[protein] + H2O = L-tyrosyl-[protein] + phosphate. The enzyme catalyses O-phospho-L-seryl-[protein] + H2O = L-seryl-[protein] + phosphate. The catalysed reaction is O-phospho-L-threonyl-[protein] + H2O = L-threonyl-[protein] + phosphate. Functionally, dual specificity phosphatase that dephosphorylates MAPK8/JNK and MAPK14/p38, but not MAPK1/ERK2, in vitro. Exhibits intrinsic phosphatase activity towards both phospho-seryl/threonyl and -tyrosyl residues, with similar specific activities in vitro. This Mus musculus (Mouse) protein is Dual specificity protein phosphatase 13B.